Reading from the N-terminus, the 503-residue chain is 5'-3' exonuclease PLD4 (503 aa).

The Cytoplasmic portion of the chain corresponds to 1–36; it reads MDKKKEHPEMRIPLQTAVEVSDWPCSTSHDPHSGLG. Residues 37–57 form a signal-anchor for type II membrane protein membrane-spanning segment; that stretch reads MVLGMLAVLGLSSVTLILFLW. Over 58 to 503 the chain is Lumenal; the sequence is QGATSFTSHR…RQVPSQDCVW (446 aa). 3 N-linked (GlcNAc...) asparagine glycosylation sites follow: Asn-89, Asn-148, and Asn-169. A disulfide bridge links Cys-92 with Cys-248. Residues 207–234 enclose the PLD phosphodiesterase 1 domain; that stretch reads TGGVLHSKFWVVDGRHIYVGSANMDWRS. Catalysis depends on residues His-212, Lys-214, and Asp-219. Catalysis depends on His-212, which acts as the Proton donor. N-linked (GlcNAc...) asparagine glycans are attached at residues Asn-247, Asn-279, Asn-415, and Asn-425. Cys-377 and Cys-501 are oxidised to a cystine. Positions 421 to 447 constitute a PLD phosphodiesterase 2 domain; the sequence is FSRVNHSKFMVTDKTAYVGTSNWSEDY. Catalysis depends on residues His-426, Lys-428, and Asp-433. His-426 serves as the catalytic Nucleophile. The N-linked (GlcNAc...) asparagine glycan is linked to Asn-442.

This sequence belongs to the phospholipase D family. Post-translationally, highly N-glycosylated. In terms of tissue distribution, enriched in the white matter of early postnatal brains, as well as in splenic marginal zone cells. Highly expressed in dendritic cells (DCs) and other myeloid cells, with lower expression in B cell.

It is found in the endoplasmic reticulum membrane. The protein resides in the golgi apparatus. Its subcellular location is the trans-Golgi network membrane. The protein localises to the nucleus. It localises to the early endosome. It is found in the cytoplasmic vesicle. The protein resides in the phagosome. Its subcellular location is the lysosome. It carries out the reaction Exonucleolytic cleavage in the 5'- to 3'-direction to yield nucleoside 3'-phosphates.. The catalysed reaction is a 5'-end 5'-dephospho-ribonucleotidyl-ribonucleotide-RNA + H2O = a ribonucleoside 3'-phosphate + a 5'-end dephospho-ribonucleoside-RNA + H(+). It catalyses the reaction a ribonucleoside 3'-phosphate-2'-3'-cyclophospho-GMP + H2O = a ribonucleoside 3'-phosphate + 2',3'-cyclophospho-GMP + H(+). The enzyme catalyses a 5'-end 5'-dephospho-2'-deoxyribonucleotidyl-2'-deoxyribonucleotide in single-stranded DNA + H2O = a 5'-end dephospho-2'-deoxyribonucleoside in single-stranded DNA + a 2'-deoxyribonucleoside 3'-phosphate + H(+). It carries out the reaction a 5'-end 5'-phospho-2'-deoxyribonucleotide in single-stranded DNA + H2O = a 5'-end 5'-dephospho-2'-deoxyribonucleotide in single-stranded DNA + phosphate. The catalysed reaction is a 3-lyso-sn-glycero-1-phospho-(3'-acyl-1'-sn-glycerol) + a 1-acyl-sn-glycerol = a 3-acyl-sn-glycero-1-phospho-(3'-acyl-1'-sn-glycerol) + glycerol. It catalyses the reaction 3-lyso-sn-glycero-1-phospho-(3'-(9Z-octadecenoyl)-1'-sn-glycerol) + 1-(9Z-octadecenoyl)-sn-glycerol = 3-(9Z-octadecenoyl)-sn-glycero-1-phospho-(3'-(9Z-octadecenoyl)-1'-sn-glycerol) + glycerol. Its activity is regulated as follows. The exonuclease activity toward ssDNA substrate is Ca(2+) and Mg(2+)-independent, but it is inhibited by Fe(2+), Cu(2+) and to a lesser extent Zn(2+) ions. In terms of biological role, 5'-&gt;3' exonuclease that hydrolyzes the phosphodiester bond of single-stranded DNA (ssDNA) and RNA molecules to form nucleoside 3'-monophosphates and 5'-end 5'-hydroxy deoxyribonucleotide/ribonucleotide fragments. Partially redundant with PLD4, can cleave all four nucleotides displaying higher efficiency for ssDNA and RNA fragments initiated with uridine and guanosine residues and lower efficiency for cytidine-initiated substrates. As a result, it does not always degrade polynucleotides to the single nucleotide level, it can stall at specific sites sparing certain fragments from exonucleolytic degradation. Processes self and pathogenic ssDNA and RNA molecules that reach the endolysosomal compartment via phagocytosis or autophagy and may serve as 'danger' signals for recognition by innate immune receptors such as toll-like receptors (TLRs). Degrades mitochondrial CpG-rich ssDNA fragments to prevent TLR9 activation and autoinflammatory response, but it can cleave viral RNA to generate ligands for TLR7 activation and initiate antiviral immune responses. In plasmacytoid dendritic cells, it cooperates with endonuclease RNASET2 to release 2',3'-cyclic guanosine monophosphate (2',3'-cGMP), a potent stimulatory ligand for TLR7. Produces 2',3'-cGMPs and cytidine-rich RNA fragments that occupy TLR7 ligand-binding pockets and trigger a signaling-competent state. Can exert polynucleotide phosphatase activity toward 5'-phosphorylated ssDNA substrates although at a slow rate. Transphosphatidylase that catalyzes the exchange with R to S stereo-inversion of the glycerol moiety between (S,R)-lysophosphatidylglycerol (LPG) and monoacylglycerol (MAG) substrates to yield (S,S)-bis(monoacylglycero)phosphate (BMP). Can synthesize a variety of (S,S)-BMPs representing the main phospholipid constituent of lysosomal intralumenal vesicle (ILV) membranes that bind acid hydrolases for lipid degradation. Regulates the homeostasis and interorganellar communication of the endolysosomal system with an overall impact on cellular removal of dysfunctional organelles via autophagy as well as proper protein and lipid turnover. May play a role in myotube formation in response to ER stress. In Mus musculus (Mouse), this protein is 5'-3' exonuclease PLD4.